A 1105-amino-acid chain; its full sequence is Mediator of RNA polymerase II transcription subunit 14 (1105 aa).

The segment at 28–48 (ASQQANGGIYRNGIGKKSHSP) is disordered.

This sequence belongs to the Mediator complex subunit 14 family. Component of the Mediator complex.

Its subcellular location is the nucleus. Its function is as follows. Component of the Mediator complex, a coactivator involved in the regulated transcription of nearly all RNA polymerase II-dependent genes. Mediator functions as a bridge to convey information from gene-specific regulatory proteins to the basal RNA polymerase II transcription machinery. Mediator is recruited to promoters by direct interactions with regulatory proteins and serves as a scaffold for the assembly of a functional preinitiation complex with RNA polymerase II and the general transcription factors. The chain is Mediator of RNA polymerase II transcription subunit 14 (RGR1) from Coccidioides immitis (strain RS) (Valley fever fungus).